Reading from the N-terminus, the 493-residue chain is 1-aminocyclopropane-1-carboxylate synthase CMW33 (493 aa).

Lys279 carries the N6-(pyridoxal phosphate)lysine modification.

Belongs to the class-I pyridoxal-phosphate-dependent aminotransferase family. Homodimer. Pyridoxal 5'-phosphate serves as cofactor.

It carries out the reaction S-adenosyl-L-methionine = 1-aminocyclopropane-1-carboxylate + S-methyl-5'-thioadenosine + H(+). It participates in alkene biosynthesis; ethylene biosynthesis via S-adenosyl-L-methionine; ethylene from S-adenosyl-L-methionine: step 1/2. Functionally, catalyzes the formation of 1-aminocyclopropane-1-carboxylate, a direct precursor of ethylene in higher plants. The polypeptide is 1-aminocyclopropane-1-carboxylate synthase CMW33 (ACS1) (Cucurbita maxima (Pumpkin)).